The following is a 717-amino-acid chain: Probable E3 ubiquitin-protein ligase WAVH2 (717 aa).

Polar residues-rich tracts occupy residues 13-28 (VSSNQDKPQQHSSLHT) and 85-94 (RTTSNATPRT). The tract at residues 13–120 (VSSNQDKPQQ…SSSSSSSQGG (108 aa)) is disordered. Positions 95–117 (SNSSSPKFFSNPSSPKSSSSSSS) are enriched in low complexity. The RING-type; atypical zinc-finger motif lies at 140 to 184 (CAICLQRVNSNQSNSTAAIFTAECSHSFHLSCVNGLEDKRCPFCS). In terms of domain architecture, VWFA spans 326–456 (DLVTVLDLSN…LNATRIPFVV (131 aa)).

In terms of tissue distribution, expressed in root tips, cotyledons, leaf primordia and hypocotyls.

The catalysed reaction is S-ubiquitinyl-[E2 ubiquitin-conjugating enzyme]-L-cysteine + [acceptor protein]-L-lysine = [E2 ubiquitin-conjugating enzyme]-L-cysteine + N(6)-ubiquitinyl-[acceptor protein]-L-lysine.. Functionally, probable E3 ubiquitin-protein ligase involved in the regulation of root growth. Acts as a positive regulator of root gravitropism. This is Probable E3 ubiquitin-protein ligase WAVH2 from Arabidopsis thaliana (Mouse-ear cress).